The following is a 103-amino-acid chain: Large ribosomal subunit protein bL21 (103 aa).

Belongs to the bacterial ribosomal protein bL21 family. As to quaternary structure, part of the 50S ribosomal subunit. Contacts protein L20.

In terms of biological role, this protein binds to 23S rRNA in the presence of protein L20. In Shewanella sp. (strain ANA-3), this protein is Large ribosomal subunit protein bL21.